The following is a 314-amino-acid chain: MTSLTIDLLSVLRREPWLYNNWFVTTHRWEVNLTFHLLTSIELWVQMRGIPLLYVCEETALEIAHELGKILTLDFHDSTTTQIAYIRVRIRFGITDRLRFFQRIIFDFGEAALISFQYERLRRICSSCFRMTHHRNSCPYRQIEPLHRVTNSTAQRNVREEVFMRDENLRSSMNSQSQMSESSFPTPIDPPPRIPHPPLNPDELVAAYYPHTRATSLPNFAGPLPQVPLRKNVDERDSNIQPFSGPAFAAHSPRLVEVGESSRQGENTQNVHTVEKGDSSKRKNMGGPRFKDDARKSNEDEHMNGGILKPPKKR.

2 disordered regions span residues 170-203 and 258-314; these read RSSM…NPDE and VGES…PKKR. Residues 171–186 show a composition bias toward low complexity; it reads SSMNSQSQMSESSFPT. Positions 187–200 are enriched in pro residues; the sequence is PIDPPPRIPHPPLN. Residues 261 to 272 show a composition bias toward polar residues; the sequence is SSRQGENTQNVH. Basic and acidic residues predominate over residues 289 to 303; it reads RFKDDARKSNEDEHM.

This is an uncharacterized protein from Arabidopsis thaliana (Mouse-ear cress).